Here is a 626-residue protein sequence, read N- to C-terminus: Chaperone protein DnaK (626 aa).

Thr-197 is modified (phosphothreonine; by autocatalysis). Composition is skewed to basic and acidic residues over residues 512-528 (DAEA…EAVE) and 539-551 (QTEK…GEKI). Disordered regions lie at residues 512-551 (DAEA…GEKI) and 601-626 (DQNA…AEVE).

Belongs to the heat shock protein 70 family.

Acts as a chaperone. The sequence is that of Chaperone protein DnaK from Campylobacter fetus subsp. fetus (strain 82-40).